The chain runs to 844 residues: DNA mismatch repair protein MutS (844 aa).

610 to 617 serves as a coordination point for ATP; it reads GPNMGGKS.

This sequence belongs to the DNA mismatch repair MutS family.

Functionally, this protein is involved in the repair of mismatches in DNA. It is possible that it carries out the mismatch recognition step. This protein has a weak ATPase activity. This chain is DNA mismatch repair protein MutS, found in Francisella tularensis subsp. novicida (strain U112).